The chain runs to 203 residues: Glycerol-3-phosphate acyltransferase (203 aa).

Helical transmembrane passes span 6 to 26 (LTLL…AVLV), 82 to 102 (AISL…PIFF), 118 to 138 (APIG…LVLI), and 141 to 161 (YSSL…WWLD).

Belongs to the PlsY family. Probably interacts with PlsX.

It is found in the cell inner membrane. The catalysed reaction is an acyl phosphate + sn-glycerol 3-phosphate = a 1-acyl-sn-glycero-3-phosphate + phosphate. It participates in lipid metabolism; phospholipid metabolism. Functionally, catalyzes the transfer of an acyl group from acyl-phosphate (acyl-PO(4)) to glycerol-3-phosphate (G3P) to form lysophosphatidic acid (LPA). This enzyme utilizes acyl-phosphate as fatty acyl donor, but not acyl-CoA or acyl-ACP. This chain is Glycerol-3-phosphate acyltransferase, found in Shewanella sp. (strain ANA-3).